The following is a 673-amino-acid chain: G-protein-signaling modulator 1 (673 aa).

The mediates association with membranes stretch occupies residues 1-507 (MASPAPPAAE…DLLSKFQSSR (507 aa)). TPR repeat units lie at residues 28 to 61 (CLELALEGERLCKAGDFKAGVAFFEAAVQVGTED), 66 to 99 (SAIYSQLGNAYFYLKEYARALQFHKHDLLLARTI), 106 to 139 (AKASGNLGNTLKVLGRFDEAIVCCQRHLDIAQEQ), 146 to 178 (ARALYNIGNVYHAKGKQLSWNAAQDPGHLPPDV), 180 to 199 (ETLHRASEFYERNLSLVKEL), 206 to 239 (GRAYGNLGNTHYLLGNFTEATTFHKERLAIAKEF), 246 to 279 (RRAYSNLGNAHIFLGRFDVAAEHYKKTLQLSRQI), 286 to 319 (AQACYSLGNTYTLLQDYERAAEYHLRHLVIAQEL), and 326 to 359 (GRACWSLGNAYVSMGSPAQALTFAKKHLQISQEI). The interaction with STK11/LKB1 stretch occupies residues 361-485 (DRNGELTARM…VRVQVPRTGI (125 aa)). Ser410 carries the post-translational modification Phosphoserine. Arg418 carries the post-translational modification Omega-N-methylarginine. The segment covering 420–439 (PLDREQNGETHHTGDWRGPS) has biased composition (basic and acidic residues). The tract at residues 420–477 (PLDREQNGETHHTGDWRGPSRDSLPLPMRSRKYQEGPDAIERRPREGSHSPLDSADVR) is disordered. Residues Ser442, Ser467, Ser469, Ser490, and Ser491 each carry the phosphoserine modification. The segment covering 451 to 467 (KYQEGPDAIERRPREGS) has biased composition (basic and acidic residues). The GoLoco 1 domain maps to 493 to 515 (EECFFDLLSKFQSSRMDDQRCPL). Residues 510–544 (DQRCPLEEGQAGAAEATAAPTLEERAAQPSVTASP) form a disordered region. A compositionally biased stretch (low complexity) spans 516 to 530 (EEGQAGAAEATAAPT). Residues Ser543 and Ser567 each carry the phosphoserine modification. 3 consecutive GoLoco domains span residues 546 to 568 (TEEFFDLIASSQSRRLDDQRASV), 594 to 616 (GDEFFNMLIKYQSSRIDDQRCPP), and 628 to 650 (DEDFFSLIQRVQAKRMDEQRVDL). Disordered stretches follow at residues 609–628 (IDDQRCPPPDVLPRGPTMPD) and 645–673 (EQRVDLAGSPDQEASGLPDPRQQCPPGAS). Phosphoserine is present on Ser653.

It belongs to the GPSM family. In terms of assembly, interacts with INSC/inscuteable and FRMPD1. Interacts with GNAI1, GNAI2 and GNAI3 preferentially in their GDP-bound state. May also interact with GNAO1. Interacts with STK11/LKB1 and MACF1. Phosphorylation regulates interaction with G(i/o) alpha. Isoform 4 is specifically expressed in brain by neurons and also detected in testis, liver, kidney, heart and pancreas (at protein level). Highly expressed in cerebellum and subventricular zone-olfactory bulb system. Isoform 2 and isoform 3 are specifically expressed in heart and are also detected in brain.

The protein localises to the endoplasmic reticulum membrane. The protein resides in the golgi apparatus membrane. It localises to the cell membrane. It is found in the cytoplasm. Its subcellular location is the cytosol. Functionally, guanine nucleotide dissociation inhibitor (GDI) which functions as a receptor-independent activator of heterotrimeric G-protein signaling. Keeps G(i/o) alpha subunit in its GDP-bound form thus uncoupling heterotrimeric G-proteins signaling from G protein-coupled receptors. Controls spindle orientation and asymmetric cell fate of cerebral cortical progenitors. May also be involved in macroautophagy in intestinal cells. May play a role in drug addiction. This is G-protein-signaling modulator 1 (Gpsm1) from Rattus norvegicus (Rat).